The primary structure comprises 158 residues: Phosphopantetheine adenylyltransferase (158 aa).

S9 provides a ligand contact to substrate. ATP-binding positions include 9–10 (SF) and H17. Substrate contacts are provided by K41, V73, and K87. Residues 88-90 (GLR), E98, and 122-128 (YSFVSSS) each bind ATP.

Belongs to the bacterial CoaD family. As to quaternary structure, homohexamer. Mg(2+) is required as a cofactor.

Its subcellular location is the cytoplasm. It catalyses the reaction (R)-4'-phosphopantetheine + ATP + H(+) = 3'-dephospho-CoA + diphosphate. It participates in cofactor biosynthesis; coenzyme A biosynthesis; CoA from (R)-pantothenate: step 4/5. Reversibly transfers an adenylyl group from ATP to 4'-phosphopantetheine, yielding dephospho-CoA (dPCoA) and pyrophosphate. The sequence is that of Phosphopantetheine adenylyltransferase from Mycobacterium sp. (strain JLS).